Here is a 501-residue protein sequence, read N- to C-terminus: Armadillo repeat-containing protein 6 (501 aa).

Serine 64 carries the phosphoserine modification. ARM repeat units follow at residues 220–264 (GVLP…HAHN), 274–318 (KGLK…DLGG), 319–369 (LSIL…RAGG), and 370–412 (TESI…VEGG). Histidine 263 is subject to Pros-methylhistidine.

This sequence belongs to the ARMC6 family. In terms of processing, methylated at His-263 by METTL9.

The chain is Armadillo repeat-containing protein 6 (ARMC6) from Pongo abelii (Sumatran orangutan).